A 406-amino-acid polypeptide reads, in one-letter code: Vacuole membrane protein 1 (406 aa).

The segment covering 1 to 20 has biased composition (basic and acidic residues); that stretch reads MAENGKNCDQRRVAMNKEQH. A disordered region spans residues 1-36; sequence MAENGKNCDQRRVAMNKEQHNGNFTDPSSVNEKKRR. Position 2 is an N-acetylalanine (Ala-2). Residues 2–43 are Cytoplasmic-facing; the sequence is AENGKNCDQRRVAMNKEQHNGNFTDPSSVNEKKRREREERQN. Positions 21-30 are enriched in polar residues; the sequence is NGNFTDPSSV. Residues 44-64 traverse the membrane as a helical segment; sequence IVLWRQPLITLQYFSLEILVI. At 65–77 the chain is on the extracellular side; it reads LKEWTSKLWHRQS. The chain crosses the membrane as a helical span at residues 78-98; sequence IVVSFLLLLAVLIATYYVEGA. The Cytoplasmic portion of the chain corresponds to 99-109; sequence HQQYVQRIEKQ. A helical membrane pass occupies residues 110–130; sequence FLLYAYWIGLGILSSVGLGTG. Residues 131 to 250 are Extracellular-facing; the sequence is LHTFLLYLGP…ASRAKLAVQK (120 aa). The interval 173-316 is VTT domain; sequence GTEGTISLWS…FVIITFSKHI (144 aa). A helical transmembrane segment spans residues 251–271; that stretch reads LVQKVGFFGILACASIPNPLF. Residues 272–273 are Cytoplasmic-facing; it reads DL. A helical membrane pass occupies residues 274–294; it reads AGITCGHFLVPFWTFFGATLI. Topologically, residues 295–305 are extracellular; the sequence is GKAIIKMHIQK. The helical transmembrane segment at 306–326 threads the bilayer; that stretch reads IFVIITFSKHIVEQMVAFIGA. The Cytoplasmic portion of the chain corresponds to 327–363; it reads VPGIGPSLQKPFQEYLEAQRQKLHHKSEMGTPQGENW. The helical transmembrane segment at 364-384 threads the bilayer; the sequence is LSWMFEKLVVVMVCYFILSII. The Extracellular segment spans residues 385–406; it reads NSMAQSYAKRIQQRLNSEEKTK.

It belongs to the VMP1 family. Interacts with BECN1. Interacts with TJP1. Interacts with TP53INP2. Interacts with TMEM41B. Interacts with ATP2A2, PLN and SLN; competes with PLN and SLN to prevent them from forming an inhibitory complex with ATP2A2. Interacts with ATG2A.

Its subcellular location is the endoplasmic reticulum-Golgi intermediate compartment membrane. It is found in the cell membrane. The protein resides in the vacuole membrane. The protein localises to the endoplasmic reticulum membrane. It carries out the reaction a 1,2-diacyl-sn-glycero-3-phospho-L-serine(in) = a 1,2-diacyl-sn-glycero-3-phospho-L-serine(out). The enzyme catalyses cholesterol(in) = cholesterol(out). The catalysed reaction is a 1,2-diacyl-sn-glycero-3-phosphocholine(in) = a 1,2-diacyl-sn-glycero-3-phosphocholine(out). It catalyses the reaction a 1,2-diacyl-sn-glycero-3-phosphoethanolamine(in) = a 1,2-diacyl-sn-glycero-3-phosphoethanolamine(out). Phospholipid scramblase involved in lipid homeostasis and membrane dynamics processes. Has phospholipid scramblase activity toward cholesterol and phosphatidylserine, as well as phosphatidylethanolamine and phosphatidylcholine. Required for autophagosome formation: participates in early stages of autophagosome biogenesis at the endoplasmic reticulum (ER) membrane by reequilibrating the leaflets of the ER as lipids are extracted by ATG2 (ATG2A or ATG2B) to mediate autophagosome assembly. Regulates ATP2A2 activity to control ER-isolation membrane contacts for autophagosome formation. In addition to autophagy, involved in other processes in which phospholipid scramblase activity is required. Modulates ER contacts with lipid droplets, mitochondria and endosomes. Plays an essential role in formation of cell junctions. Upon stress such as bacterial and viral infection, promotes formation of cytoplasmic vacuoles followed by cell death. Involved in the cytoplasmic vacuolization of acinar cells during the early stage of acute pancreatitis. The chain is Vacuole membrane protein 1 from Pongo abelii (Sumatran orangutan).